A 408-amino-acid polypeptide reads, in one-letter code: UDP-N-acetylglucosamine--dolichyl-phosphate N-acetylglucosaminephosphotransferase (408 aa).

Transmembrane regions (helical) follow at residues 6-26 (SLLG…IYLP) and 32-52 (WIIV…YKLI). UDP-N-acetyl-alpha-D-glucosamine-binding residues include Asp68 and Glu84. Transmembrane regions (helical) follow at residues 87–107 (GICV…FQWF) and 120–140 (AALT…VLNL). Lys145 serves as a coordination point for dolichyl phosphate. Helical transmembrane passes span 147-167 (ILPM…TTVV) and 181-201 (LGVV…LAIF). 200 to 208 (IFCTNSINI) lines the dolichyl phosphate pocket. Residue Asn207 coordinates Mg(2+). Asn213 contributes to the UDP-N-acetyl-alpha-D-glucosamine binding site. The next 2 helical transmembrane spans lie at 221-241 (VVIA…ASSV) and 258-278 (HLFS…LLFY). Asp289 contacts Mg(2+). Residues 297–317 (MCFAVVAILCHFSKTLLLFFI) traverse the membrane as a helical segment. UDP-N-acetyl-alpha-D-glucosamine is bound at residue 338–340 (RHR). A run of 2 helical transmembrane segments spans residues 351–371 (MEAI…TGPL) and 376–396 (LCVY…GIRY).

It belongs to the glycosyltransferase 4 family. Homodimer. Mg(2+) serves as cofactor.

The protein resides in the endoplasmic reticulum membrane. The enzyme catalyses a di-trans,poly-cis-dolichyl phosphate + UDP-N-acetyl-alpha-D-glucosamine = an N-acetyl-alpha-D-glucosaminyl-diphospho-di-trans,poly-cis-dolichol + UMP. It functions in the pathway protein modification; protein glycosylation. With respect to regulation, inhibited by natural nucleoside antibiotic tunicamycin, which acts as a structural analog and competitor of UDP-GlcNAc. UDP-N-acetylglucosamine--dolichyl-phosphate N-acetylglucosaminephosphotransferase that operates in the biosynthetic pathway of dolichol-linked oligosaccharides, the glycan precursors employed in protein asparagine (N)-glycosylation. The assembly of dolichol-linked oligosaccharides begins on the cytosolic side of the endoplasmic reticulum membrane and finishes in its lumen. The sequential addition of sugars to dolichol pyrophosphate produces dolichol-linked oligosaccharides containing fourteen sugars, including two GlcNAcs, nine mannoses and three glucoses. Once assembled, the oligosaccharide is transferred from the lipid to nascent proteins by oligosaccharyltransferases. Catalyzes the initial step of dolichol-linked oligosaccharide biosynthesis, transfering GlcNAc-1-P from cytosolic UDP-GlcNAc onto the carrier lipid dolichyl phosphate (P-dolichol), yielding GlcNAc-P-P-dolichol embedded in the cytoplasmic leaflet of the endoplasmic reticulum membrane. The sequence is that of UDP-N-acetylglucosamine--dolichyl-phosphate N-acetylglucosaminephosphotransferase (alg7) from Dictyostelium discoideum (Social amoeba).